We begin with the raw amino-acid sequence, 588 residues long: Protein kinase C iota type (588 aa).

A PB1 domain is found at Gln-18–Cys-101. The segment at Gly-133–Cys-183 adopts a Phorbol-ester/DAG-type zinc-finger fold. Residues Gly-194–Lys-213 are disordered. The 269-residue stretch at Phe-246 to Phe-514 folds into the Protein kinase domain. ATP is bound by residues Ile-252 to Val-260 and Lys-275. The active-site Proton acceptor is the Asp-370. Residues Thr-404 and Thr-556 each carry the phosphothreonine modification. The 72-residue stretch at Arg-515–Glu-586 folds into the AGC-kinase C-terminal domain.

This sequence belongs to the protein kinase superfamily. AGC Ser/Thr protein kinase family. PKC subfamily.

The catalysed reaction is L-seryl-[protein] + ATP = O-phospho-L-seryl-[protein] + ADP + H(+). The enzyme catalyses L-threonyl-[protein] + ATP = O-phospho-L-threonyl-[protein] + ADP + H(+). Its activity is regulated as follows. Exhibits an elevated basal enzymatic activity and is not regulated by diacylglycerol, phosphatidylserine, phorbol esters or calcium ions. Two specific sites, Thr-404 (activation loop of the kinase domain) and Thr-556 (turn motif), need to be phosphorylated for its full activation. Calcium- and diacylglycerol-independent serine/ threonine-protein kinase that plays a general protective role against apoptotic stimuli, is involved in NF-kappa-B activation, cell survival, differentiation and polarity, and contributes to the regulation of microtubule dynamics in the early secretory pathway. Is required for the formation and maintenance of the zonula adherens during early epithelial development and plays a critical role in organ morphogenesis and in regulating the orientation of cell division. Required for polarized epithelial organization, myocardium coherence and cell connectivity in the early somite stages. Required for heart cone tilt and development of circulatory architecture during embryogenesis. The polypeptide is Protein kinase C iota type (prkci) (Danio rerio (Zebrafish)).